A 295-amino-acid polypeptide reads, in one-letter code: Acetylglutamate kinase (295 aa).

Substrate-binding positions include 64 to 65 (GG), Arg86, and Asn190.

This sequence belongs to the acetylglutamate kinase family. ArgB subfamily.

It localises to the cytoplasm. The enzyme catalyses N-acetyl-L-glutamate + ATP = N-acetyl-L-glutamyl 5-phosphate + ADP. It participates in amino-acid biosynthesis; L-arginine biosynthesis; N(2)-acetyl-L-ornithine from L-glutamate: step 2/4. Functionally, catalyzes the ATP-dependent phosphorylation of N-acetyl-L-glutamate. The protein is Acetylglutamate kinase of Heliobacterium modesticaldum (strain ATCC 51547 / Ice1).